The chain runs to 859 residues: MVSIAFYGGIPGGISTPITQQSEKSKYEENTMFQPYCYNNDSKNSMAESKEARDQEMNLKEESKEEKRRNDWWKIGMFLLCLAGTTGGILWWYEGLPQQHYIGLVAIGGRLNGSGQSNAIECWGSFPGCRPFQNYFSYETNRSMHMDNNTATLLEAYHREITFIYKSSCTDSDHCQEYQCKKVNLNSSDSSNSVRVEDVTNTAEYWGFKWLECNQTENFKTILVPENEMVNINDTDTWIPKGCNETWARVKRCPIDILYGIHPIRLCVQPPFFLVQEKGIADTSRIGNCGPTIFLGVLEDNKGVVRGDYTACNVSRLNINRKDYTGIYQVPIFYTCTFTNITSCNNEPIISVIMYETNQVQYLLCNNNNSNNYNCVVQSFGVIGQAHLELPRPNKRIRNQSFNQYNCSINNKTELETWKLVKTSGITPLPISSEANTGLIRHKRDFGISAIVAAIVAATAIAASATMSYVALTEVNKIMEVQNHTFEVENSTLNGMDLIERQIKILYAMILQTHADVQLLKERQQVEETFNLIGCIERTHVFCHTGHPWNMSWGHLNESTQWDDWVSKMEDLNQEILTTLHGARNNLAQSMITFNTPDSIAQFGKDLWSHIGNWIPGLGASIIKYIVMFLLIYLLLTSSPKILRALWKVTSGAGSSGSRYLKKKFHHKHASREDTWDQAQHNIHLAGVTGGSGDKYYKQKYSRNDWNGESEEYNRRPKSWVKSIEAFGESYISEKTKGEISQPGAAINEHKNGSGGNNPHQGSLDLEIRSEGGNIYDCCIKAQEGTLAIPCCGFPLWLFWGLVIIVGRIAGYGLRGLAVIIRICTRGLNLIFEIIRKMLDYIGRALNPGTSHVSMPQYV.

A propeptide spanning residues 1-6 (MVSIAF) is cleaved from the precursor. The Extracellular portion of the chain corresponds to 7-614 (YGGIPGGIST…KDLWSHIGNW (608 aa)). 14 N-linked (GlcNAc...) asparagine; by host glycosylation sites follow: N40, N112, N141, N148, N186, N214, N233, N244, N313, N340, N368, N399, N406, and N411. Residues 446-466 (FGISAIVAAIVAATAIAASAT) are fusion peptide. N-linked (GlcNAc...) asparagine; by host glycans are attached at residues N483 and N490. The interval 498–513 (LIERQIKILYAMILQT) is immunosuppression. Residues N550 and N557 are each glycosylated (N-linked (GlcNAc...) asparagine; by host). 2 coiled-coil regions span residues 576-624 (ILTT…SIIK) and 663-699 (KKFHHKHASREDTWDQAQHNIHLAGVTGGSGDKYYKQ). A helical transmembrane segment spans residues 615–635 (IPGLGASIIKYIVMFLLIYLL). Residues 636 to 859 (LTSSPKILRA…TSHVSMPQYV (224 aa)) are Cytoplasmic-facing.

In terms of assembly, the mature envelope protein (Env) consists of a trimer of SU-TM heterodimers attached by noncovalent interactions or by a labile interchain disulfide bond. Post-translationally, specific enzymatic cleavages in vivo yield mature proteins. Envelope glycoproteins are synthesized as an inactive precursor that is N-glycosylated and processed likely by host cell furin or by a furin-like protease in the Golgi to yield the mature SU and TM proteins. The cleavage site between SU and TM requires the minimal sequence [KR]-X-[KR]-R.

It is found in the virion membrane. Its subcellular location is the host cell membrane. Functionally, the surface protein (SU) attaches the virus to the host cell by binding to its receptor. This interaction triggers the refolding of the transmembrane protein (TM) and is thought to activate its fusogenic potential by unmasking its fusion peptide. Fusion occurs at the host cell plasma membrane. The transmembrane protein (TM) acts as a class I viral fusion protein. Under the current model, the protein has at least 3 conformational states: pre-fusion native state, pre-hairpin intermediate state, and post-fusion hairpin state. During viral and target cell membrane fusion, the coiled coil regions (heptad repeats) assume a trimer-of-hairpins structure, positioning the fusion peptide in close proximity to the C-terminal region of the ectodomain. The formation of this structure appears to drive apposition and subsequent fusion of viral and target cell membranes. Membranes fusion leads to delivery of the nucleocapsid into the cytoplasm. This chain is Envelope glycoprotein (env), found in Equus asinus (Donkey).